A 63-amino-acid chain; its full sequence is Alpha-conotoxin-like PuSG1.2 (63 aa).

The signal sequence occupies residues 1 to 21 (MRCLALLVVTLLLFTATATTG). Residues 22-43 (ASNGMNAAASGEAPDSISLAVR) constitute a propeptide that is removed on maturation. 2 disulfide bridges follow: Cys46-Cys52 and Cys47-Cys60. The interval 48–50 (PDP) is lacks the Ser-Xaa-Pro motif that is crucial for potent interaction with nAChR.

It belongs to the conotoxin A superfamily. As to expression, expressed by the salivary gland.

The protein localises to the secreted. Its function is as follows. Alpha-conopeptides-like may act on postsynaptic membranes, they bind to the nicotinic acetylcholine receptors (nAChR) and thus inhibit them. Has possibly a distinct nAChR binding mode from other alpha-conotoxins, due to a different three residue motif (lacks the Ser-Xaa-Pro motif). The polypeptide is Alpha-conotoxin-like PuSG1.2 (Conus pulicarius (Flea-bitten cone)).